Reading from the N-terminus, the 159-residue chain is Immunoglobulin J chain (159 aa).

The signal sequence occupies residues 1–22 (MKNHLLFWGVLAVFIKAVHVKA). Glutamine 23 is subject to Pyrrolidone carboxylic acid. 3 disulfide bridges follow: cysteine 35/cysteine 123, cysteine 94/cysteine 114, and cysteine 131/cysteine 156. An N-linked (GlcNAc...) (complex) asparagine glycan is attached at asparagine 71.

Part of the secretory IgA (sIgA) complex that consists of two, four or five IgA monomers, and two additional non-Ig polypeptides, namely the JCHAIN and the secretory component (the proteolytic product of PIGR). Part of the secretory IgM (sIgM) complex that consists of five IgM monomers, and two additional non-Ig polypeptides, namely the JCHAIN and the secretory component (the proteolytic product of PIGR). JCHAIN-containing IgM interacts (via CH4 domain) with FCRM (via Ig-like domain).

The protein resides in the secreted. Its function is as follows. Serves to link two monomer units of either IgM or IgA. In the case of IgM, the J chain-joined dimer is a nucleating unit for the IgM pentamer, and in the case of IgA it induces dimers and/or larger polymers. It also helps to bind these immunoglobulins to secretory component. The chain is Immunoglobulin J chain from Homo sapiens (Human).